Reading from the N-terminus, the 839-residue chain is Protein translocase subunit SecA (839 aa).

ATP-binding positions include glutamine 85, 103-107 (GEGKT), and aspartate 493. Basic and acidic residues predominate over residues 780 to 790 (QIHEQERERAS). Residues 780 to 839 (QIHEQERERASQRATTAAPQNIQSQQSANTDDLPKVERNEACPCGSGKKFKNCHGRKSFS) are disordered. Residues 791 to 809 (QRATTAAPQNIQSQQSANT) show a composition bias toward polar residues. Residues cysteine 821, cysteine 823, cysteine 832, and histidine 833 each contribute to the Zn(2+) site. The segment covering 827 to 839 (KKFKNCHGRKSFS) has biased composition (basic residues).

Belongs to the SecA family. In terms of assembly, monomer and homodimer. Part of the essential Sec protein translocation apparatus which comprises SecA, SecYEG and auxiliary proteins SecDF. Other proteins may also be involved. It depends on Zn(2+) as a cofactor.

The protein localises to the cell membrane. It is found in the cytoplasm. It carries out the reaction ATP + H2O + cellular proteinSide 1 = ADP + phosphate + cellular proteinSide 2.. Its function is as follows. Part of the Sec protein translocase complex. Interacts with the SecYEG preprotein conducting channel. Has a central role in coupling the hydrolysis of ATP to the transfer of proteins into and across the cell membrane, serving as an ATP-driven molecular motor driving the stepwise translocation of polypeptide chains across the membrane. The polypeptide is Protein translocase subunit SecA (Streptococcus pyogenes serotype M28 (strain MGAS6180)).